The primary structure comprises 557 residues: Formate--tetrahydrofolate ligase 2 (557 aa).

Position 66–73 (66–73 (TPAGEGKT)) interacts with ATP.

It belongs to the formate--tetrahydrofolate ligase family.

It carries out the reaction (6S)-5,6,7,8-tetrahydrofolate + formate + ATP = (6R)-10-formyltetrahydrofolate + ADP + phosphate. The protein operates within one-carbon metabolism; tetrahydrofolate interconversion. The chain is Formate--tetrahydrofolate ligase 2 from Streptococcus pyogenes serotype M4 (strain MGAS10750).